The chain runs to 1070 residues: DNA-directed RNA polymerase subunit beta (1070 aa).

The protein belongs to the RNA polymerase beta chain family. In plastids the minimal PEP RNA polymerase catalytic core is composed of four subunits: alpha, beta, beta', and beta''. When a (nuclear-encoded) sigma factor is associated with the core the holoenzyme is formed, which can initiate transcription.

It localises to the plastid. It is found in the chloroplast. The enzyme catalyses RNA(n) + a ribonucleoside 5'-triphosphate = RNA(n+1) + diphosphate. Its function is as follows. DNA-dependent RNA polymerase catalyzes the transcription of DNA into RNA using the four ribonucleoside triphosphates as substrates. This chain is DNA-directed RNA polymerase subunit beta, found in Platanus occidentalis (Sycamore).